The following is a 154-amino-acid chain: PTTG1IP family member 2 (154 aa).

Residues 1-26 form the signal peptide; the sequence is MCWLRAWGQILLPVFLSLFLIQLLIS. Residues 27 to 97 lie on the Extracellular side of the membrane; the sequence is FSENGFIHSP…SIYWLNCKVD (71 aa). The chain crosses the membrane as a helical span at residues 98 to 118; it reads MFGIMMLLLIAVLITGFVWYC. The Cytoplasmic portion of the chain corresponds to 119-154; that stretch reads CAYHFYLQDLNRNRVYFYGRRETVPIHDRSATVYDE.

The protein resides in the membrane. This is PTTG1IP family member 2 from Homo sapiens (Human).